Here is a 143-residue protein sequence, read N- to C-terminus: UPF0102 protein Acid345_3985 (143 aa).

This sequence belongs to the UPF0102 family.

This chain is UPF0102 protein Acid345_3985, found in Koribacter versatilis (strain Ellin345).